A 374-amino-acid chain; its full sequence is Queuine tRNA-ribosyltransferase (374 aa).

The active-site Proton acceptor is the aspartate 95. Residues 95 to 99, aspartate 149, glutamine 191, and glycine 218 contribute to the substrate site; that span reads DSGGF. The tract at residues 249 to 255 is RNA binding; sequence GVGTYRE. Catalysis depends on aspartate 268, which acts as the Nucleophile. Residues 273–277 are RNA binding; important for wobble base 34 recognition; the sequence is TRWAR. 4 residues coordinate Zn(2+): cysteine 306, cysteine 308, cysteine 311, and histidine 337.

It belongs to the queuine tRNA-ribosyltransferase family. In terms of assembly, homodimer. Within each dimer, one monomer is responsible for RNA recognition and catalysis, while the other monomer binds to the replacement base PreQ1. Zn(2+) is required as a cofactor.

It catalyses the reaction 7-aminomethyl-7-carbaguanine + guanosine(34) in tRNA = 7-aminomethyl-7-carbaguanosine(34) in tRNA + guanine. It functions in the pathway tRNA modification; tRNA-queuosine biosynthesis. Functionally, catalyzes the base-exchange of a guanine (G) residue with the queuine precursor 7-aminomethyl-7-deazaguanine (PreQ1) at position 34 (anticodon wobble position) in tRNAs with GU(N) anticodons (tRNA-Asp, -Asn, -His and -Tyr). Catalysis occurs through a double-displacement mechanism. The nucleophile active site attacks the C1' of nucleotide 34 to detach the guanine base from the RNA, forming a covalent enzyme-RNA intermediate. The proton acceptor active site deprotonates the incoming PreQ1, allowing a nucleophilic attack on the C1' of the ribose to form the product. After dissociation, two additional enzymatic reactions on the tRNA convert PreQ1 to queuine (Q), resulting in the hypermodified nucleoside queuosine (7-(((4,5-cis-dihydroxy-2-cyclopenten-1-yl)amino)methyl)-7-deazaguanosine). The sequence is that of Queuine tRNA-ribosyltransferase from Nostoc sp. (strain PCC 7120 / SAG 25.82 / UTEX 2576).